A 111-amino-acid polypeptide reads, in one-letter code: U-scoloptoxin(16)-Sm2a (111 aa).

The signal sequence occupies residues 1 to 28 (MCAKPNHLFVTVTFIFGFAVCIVQISAW).

The protein belongs to the scoloptoxin-16 family. Post-translationally, contains 4 disulfide bonds. As to expression, expressed by the venom gland.

The protein localises to the secreted. The protein is U-scoloptoxin(16)-Sm2a of Scolopendra morsitans (Tanzanian blue ringleg centipede).